The sequence spans 149 residues: Urease accessory protein UreE (149 aa).

The protein belongs to the UreE family.

Its subcellular location is the cytoplasm. Involved in urease metallocenter assembly. Binds nickel. Probably functions as a nickel donor during metallocenter assembly. In Ureaplasma urealyticum serovar 10 (strain ATCC 33699 / Western), this protein is Urease accessory protein UreE.